We begin with the raw amino-acid sequence, 259 residues long: Ribonuclease HII (259 aa).

One can recognise an RNase H type-2 domain in the interval 69–257 (VAVCGVDEVG…VLEESQGLIY (189 aa)). Asp-75, Glu-76, and Asp-167 together coordinate a divalent metal cation.

Belongs to the RNase HII family. Requires Mn(2+) as cofactor. Mg(2+) is required as a cofactor.

Its subcellular location is the cytoplasm. The enzyme catalyses Endonucleolytic cleavage to 5'-phosphomonoester.. In terms of biological role, endonuclease that specifically degrades the RNA of RNA-DNA hybrids. This chain is Ribonuclease HII, found in Shouchella clausii (strain KSM-K16) (Alkalihalobacillus clausii).